The sequence spans 398 residues: Protein FAM53A (398 aa).

The disordered stretch occupies residues 85–253; it reads QWQPQSPRPG…TSTPALGGRR (169 aa). Residues 103 to 115 show a composition bias toward polar residues; the sequence is VDPSESTGSSTAP. The segment covering 123–132 has biased composition (basic and acidic residues); sequence SLSEPEELVR. The residue at position 125 (Ser125) is a Phosphoserine. 2 stretches are compositionally biased toward low complexity: residues 176 to 193 and 234 to 250; these read STGP…ASGG and TPLP…PALG. A Nuclear localization signal motif is present at residues 268-276; that stretch reads KRSRRKRRR. Ser301 and Ser304 each carry phosphoserine. The disordered stretch occupies residues 336 to 398; the sequence is PGCSQRGLRT…ELDLEQIENN (63 aa). The span at 363–375 shows a compositional bias: basic and acidic residues; that stretch reads GSRRSSGDPRDGD.

Belongs to the FAM53 family.

The protein resides in the nucleus. In terms of biological role, may play an important role in neural development; the dorsomedial roof of the third ventricle. This chain is Protein FAM53A, found in Homo sapiens (Human).